The following is a 313-amino-acid chain: Putative S-adenosyl-L-methionine-dependent methyltransferase MMAR_0955 (313 aa).

Residues D132 and 161–162 each bind S-adenosyl-L-methionine; that span reads DL.

The protein belongs to the UPF0677 family.

Its function is as follows. Exhibits S-adenosyl-L-methionine-dependent methyltransferase activity. This chain is Putative S-adenosyl-L-methionine-dependent methyltransferase MMAR_0955, found in Mycobacterium marinum (strain ATCC BAA-535 / M).